The following is a 548-amino-acid chain: ATP synthase subunit alpha (548 aa).

172–179 (GDRKTGKT) is an ATP binding site. The segment at 526 to 548 (AEAMDEADVEKESVKVRKPAPKK) is disordered.

It belongs to the ATPase alpha/beta chains family. F-type ATPases have 2 components, CF(1) - the catalytic core - and CF(0) - the membrane proton channel. CF(1) has five subunits: alpha(3), beta(3), gamma(1), delta(1), epsilon(1). CF(0) has three main subunits: a(1), b(2) and c(9-12). The alpha and beta chains form an alternating ring which encloses part of the gamma chain. CF(1) is attached to CF(0) by a central stalk formed by the gamma and epsilon chains, while a peripheral stalk is formed by the delta and b chains.

The protein localises to the cell membrane. It carries out the reaction ATP + H2O + 4 H(+)(in) = ADP + phosphate + 5 H(+)(out). In terms of biological role, produces ATP from ADP in the presence of a proton gradient across the membrane. The alpha chain is a regulatory subunit. This Mycolicibacterium vanbaalenii (strain DSM 7251 / JCM 13017 / BCRC 16820 / KCTC 9966 / NRRL B-24157 / PYR-1) (Mycobacterium vanbaalenii) protein is ATP synthase subunit alpha.